A 674-amino-acid chain; its full sequence is MNHSNHMHHDNHESHHHYSGHAHHHGNFKVKFFVSLIFAIPIILLSPMMGVNLPFQFTFPGSEWVVLILSTILFFYGGKPFLSGGKDEIAAKKPGMMTLVALGISVAYIYSLYAFYMNNFSSATGHTMDFFWELATLILIMLLGHWIEMNAVGNAGDALKKMAELLPNSAIKVMDNGQREEVKISDIMTDDIVEVKAGESIPTDGIIVQGQTSVDESLVTGESKKVQKNQNDNVIGGSINGSGTIQVKVTAVGEDGYLSQVMGLVNQAQNDKSSAELLSDKVAGYLFYFAVIVGVISFIVWMLIQNDVDFALERLVTVLVIACPHALGLAIPLVTARSTSIGAHNGLIIKNRESVEIAQHIDYVMMDKTGTLTEGNFSVNHYESFKNDLSNDTILSLFASLESQSNHPLAISIVDFTKSKNVSFTNPQDVNNIPGVGLEGLIDNKTYKITNVSYLDQHGFEYDNDLFIKLAQQGNSISYLIEDQQVIGMIAQGDQIKESSKQMVADLLSRHITPVMLTGDNDEVAHAVAKELGISDVHAQLMPEDKESIIKDYQSDGNKVMMVGDGINDAPSLIRADIGIAIGAGTDVAVDSGDIILVKSNPSDIIHFLTLSNNTMRKMVQNLWWGAGYNIVAVPLAAGALAFIGLILSPAVGAILMSLSTVIVAINAFTLKLK.

Residues 1–20 (MNHSNHMHHDNHESHHHYSG) form a disordered region. A run of 6 helical transmembrane segments spans residues 32–52 (FFVSLIFAIPIILLSPMMGVN), 57–77 (FTFPGSEWVVLILSTILFFYG), 95–115 (GMMTLVALGISVAYIYSLYAF), 127–147 (TMDFFWELATLILIMLLGHWI), 284–304 (GYLFYFAVIVGVISFIVWMLI), and 315–335 (LVTVLVIACPHALGLAIPLVT). Catalysis depends on Asp-367, which acts as the 4-aspartylphosphate intermediate. Mg(2+) is bound by residues Asp-565 and Asp-569. 2 helical membrane-spanning segments follow: residues 623-645 (LWWGAGYNIVAVPLAAGALAFIG) and 649-671 (SPAVGAILMSLSTVIVAINAFTL).

The protein belongs to the cation transport ATPase (P-type) (TC 3.A.3) family. Type IB subfamily.

It localises to the cell membrane. It catalyses the reaction Cu(+)(in) + ATP + H2O = Cu(+)(out) + ADP + phosphate + H(+). Its function is as follows. Involved in copper transport. The protein is Probable copper-transporting P-type ATPase B (copB) of Staphylococcus haemolyticus (strain JCSC1435).